The primary structure comprises 629 residues: MHNKILVSSYILLVLLFSLSSFNIVVAKDGDESGNPFTPKGYVIRYWNKHVSNDLPKPWFLLNKASPLNAAQYATYTKLVADQNALSTHLQSFCSSANLMCAPDLLPSLEKHTGDIHFTTYGNKNFTNYGTNEPGIGVNTFKNYSEDASVNSFRRYGRGSPRDNKFDNYAPDGNVIDQSFNSYSTNTPGGSGQFTNYAPNTNVPDLRFTAYSDQGTGGEQEFKTYLEQGNSGGQSFKSYGKNGNGADSKFTSYGNETNVAASTFKNYGQNANGENQNFTSYSTNGNNPQNNFKNYGVGGNGPSETFTNYRDESNVGDDKFSNYVKDANAGEANFTNYGQSFNEGTDVFITYGKGGNDPHINFKTYGVNNTFKDYVKDTATFSNYHNKTSQDLASLSEVNGGKKVNNRWIEPGKFFREKMLKSGTIMPMPDIKDKMPKRSFLPRAIAAKLPFSTSKIDELKKIFHAANDSQVAKMIGDALSECERAPSPGETKQCVNSAEDMIDFATSVLGRNVVVRTTENTNGSKGNIMIGSIKGINGGKVTKSVSCHQTLYPSLLYYCHSVPKVRVYEADILDPNSKAKINHGVAICHVDTSSWGPRHGAFIALGSGPGKIEVCHWIFENDMTWATAD.

The N-terminal stretch at 1 to 27 (MHNKILVSSYILLVLLFSLSSFNIVVA) is a signal peptide. Residues 28-109 (KDGDESGNPF…MCAPDLLPSL (82 aa)) constitute a propeptide that is removed on maturation. 7 N-linked (GlcNAc...) asparagine glycosylation sites follow: Asn125, Asn143, Asn255, Asn277, Asn333, Asn368, and Asn386. Over residues 267–293 (YGQNANGENQNFTSYSTNGNNPQNNFK) the composition is skewed to polar residues. The segment at 267–305 (YGQNANGENQNFTSYSTNGNNPQNNFKNYGVGGNGPSET) is disordered. The BURP domain maps to 414 to 628 (FFREKMLKSG…FENDMTWATA (215 aa)).

Interacts with polygalacturonase to form heterodimers.

Its subcellular location is the secreted. It is found in the extracellular space. It localises to the apoplast. The protein resides in the cell wall. Non-catalytic subunit of polygalacturonase. The polypeptide is Polygalacturonase non-catalytic subunit AroGP2 (GP2) (Solanum lycopersicum (Tomato)).